Here is a 216-residue protein sequence, read N- to C-terminus: Large ribosomal subunit protein uL3 (216 aa).

The interval 132-155 (QDASHGNSRSHRVPGSIGQNQTPG) is disordered. Q152 bears the N5-methylglutamine mark.

It belongs to the universal ribosomal protein uL3 family. As to quaternary structure, part of the 50S ribosomal subunit. Forms a cluster with proteins L14 and L19. In terms of processing, methylated by PrmB.

Functionally, one of the primary rRNA binding proteins, it binds directly near the 3'-end of the 23S rRNA, where it nucleates assembly of the 50S subunit. This Legionella pneumophila (strain Paris) protein is Large ribosomal subunit protein uL3.